The sequence spans 303 residues: ATP synthase gamma chain (303 aa).

The protein belongs to the ATPase gamma chain family. As to quaternary structure, F-type ATPases have 2 components, CF(1) - the catalytic core - and CF(0) - the membrane proton channel. CF(1) has five subunits: alpha(3), beta(3), gamma(1), delta(1), epsilon(1). CF(0) has three main subunits: a, b and c.

It localises to the cell membrane. Produces ATP from ADP in the presence of a proton gradient across the membrane. The gamma chain is believed to be important in regulating ATPase activity and the flow of protons through the CF(0) complex. This is ATP synthase gamma chain from Oenococcus oeni (strain ATCC BAA-331 / PSU-1).